The chain runs to 360 residues: NAD(P)H-quinone oxidoreductase subunit 1, chloroplastic (360 aa).

9 helical membrane-spanning segments follow: residues 27-47 (IWIF…VLVI), 98-118 (FSIG…VIPF), 129-149 (IGIF…LMSG), 165-185 (AAQS…ISLL), 203-223 (FWGW…ISSL), 248-268 (YSGI…LISS), 269-289 (LFVT…ISIL), 297-317 (IFGT…FLFI), and 340-360 (FLLP…LFSL).

The protein belongs to the complex I subunit 1 family. In terms of assembly, NDH is composed of at least 16 different subunits, 5 of which are encoded in the nucleus.

It localises to the plastid. It is found in the chloroplast thylakoid membrane. It catalyses the reaction a plastoquinone + NADH + (n+1) H(+)(in) = a plastoquinol + NAD(+) + n H(+)(out). The enzyme catalyses a plastoquinone + NADPH + (n+1) H(+)(in) = a plastoquinol + NADP(+) + n H(+)(out). Functionally, NDH shuttles electrons from NAD(P)H:plastoquinone, via FMN and iron-sulfur (Fe-S) centers, to quinones in the photosynthetic chain and possibly in a chloroplast respiratory chain. The immediate electron acceptor for the enzyme in this species is believed to be plastoquinone. Couples the redox reaction to proton translocation, and thus conserves the redox energy in a proton gradient. The protein is NAD(P)H-quinone oxidoreductase subunit 1, chloroplastic of Barbarea verna (Land cress).